Here is a 122-residue protein sequence, read N- to C-terminus: Small ribosomal subunit protein uS13 (122 aa).

Positions Arg99–Lys122 are disordered.

This sequence belongs to the universal ribosomal protein uS13 family. In terms of assembly, part of the 30S ribosomal subunit. Forms a loose heterodimer with protein S19. Forms two bridges to the 50S subunit in the 70S ribosome.

Functionally, located at the top of the head of the 30S subunit, it contacts several helices of the 16S rRNA. In the 70S ribosome it contacts the 23S rRNA (bridge B1a) and protein L5 of the 50S subunit (bridge B1b), connecting the 2 subunits; these bridges are implicated in subunit movement. Contacts the tRNAs in the A and P-sites. The protein is Small ribosomal subunit protein uS13 of Sinorhizobium fredii (strain NBRC 101917 / NGR234).